The chain runs to 332 residues: Ribosomal RNA small subunit methyltransferase H (332 aa).

S-adenosyl-L-methionine is bound by residues 36-38 (GGY), Asp54, Phe81, Asp102, and Gln109. Positions 284–332 (VTAGQEEVSANPRARSAKLRAAERTAAPATADDGESPGWPSLANVMRGG) are disordered.

Belongs to the methyltransferase superfamily. RsmH family.

It is found in the cytoplasm. The enzyme catalyses cytidine(1402) in 16S rRNA + S-adenosyl-L-methionine = N(4)-methylcytidine(1402) in 16S rRNA + S-adenosyl-L-homocysteine + H(+). Functionally, specifically methylates the N4 position of cytidine in position 1402 (C1402) of 16S rRNA. The protein is Ribosomal RNA small subunit methyltransferase H of Nitrobacter hamburgensis (strain DSM 10229 / NCIMB 13809 / X14).